The chain runs to 367 residues: Phospho-N-acetylmuramoyl-pentapeptide-transferase (367 aa).

10 helical membrane-spanning segments follow: residues alanine 30–leucine 50, leucine 71–alanine 91, threonine 94–isoleucine 114, isoleucine 138–methionine 158, leucine 169–serine 189, glycine 200–alanine 220, glycine 237–phenylalanine 257, isoleucine 264–leucine 284, leucine 289–valine 309, and lysine 344–leucine 364.

It belongs to the glycosyltransferase 4 family. MraY subfamily. Mg(2+) serves as cofactor.

The protein resides in the cell inner membrane. It carries out the reaction UDP-N-acetyl-alpha-D-muramoyl-L-alanyl-gamma-D-glutamyl-meso-2,6-diaminopimeloyl-D-alanyl-D-alanine + di-trans,octa-cis-undecaprenyl phosphate = di-trans,octa-cis-undecaprenyl diphospho-N-acetyl-alpha-D-muramoyl-L-alanyl-D-glutamyl-meso-2,6-diaminopimeloyl-D-alanyl-D-alanine + UMP. It functions in the pathway cell wall biogenesis; peptidoglycan biosynthesis. Functionally, catalyzes the initial step of the lipid cycle reactions in the biosynthesis of the cell wall peptidoglycan: transfers peptidoglycan precursor phospho-MurNAc-pentapeptide from UDP-MurNAc-pentapeptide onto the lipid carrier undecaprenyl phosphate, yielding undecaprenyl-pyrophosphoryl-MurNAc-pentapeptide, known as lipid I. The polypeptide is Phospho-N-acetylmuramoyl-pentapeptide-transferase (Chlorobium phaeovibrioides (strain DSM 265 / 1930) (Prosthecochloris vibrioformis (strain DSM 265))).